A 914-amino-acid polypeptide reads, in one-letter code: Isoleucine--tRNA ligase (914 aa).

A 'HIGH' region motif is present at residues 64-74 (PYANGNFHLGH). L-isoleucyl-5'-AMP is bound at residue E557. The short motif at 598 to 602 (PMSKS) is the 'KMSKS' region element. K601 serves as a coordination point for ATP. Zn(2+) is bound by residues C889, C892, C906, and C909.

This sequence belongs to the class-I aminoacyl-tRNA synthetase family. IleS type 1 subfamily. Monomer. Zn(2+) serves as cofactor.

Its subcellular location is the cytoplasm. It catalyses the reaction tRNA(Ile) + L-isoleucine + ATP = L-isoleucyl-tRNA(Ile) + AMP + diphosphate. Its function is as follows. Catalyzes the attachment of isoleucine to tRNA(Ile). As IleRS can inadvertently accommodate and process structurally similar amino acids such as valine, to avoid such errors it has two additional distinct tRNA(Ile)-dependent editing activities. One activity is designated as 'pretransfer' editing and involves the hydrolysis of activated Val-AMP. The other activity is designated 'posttransfer' editing and involves deacylation of mischarged Val-tRNA(Ile). The sequence is that of Isoleucine--tRNA ligase from Leptospira interrogans serogroup Icterohaemorrhagiae serovar copenhageni (strain Fiocruz L1-130).